The sequence spans 291 residues: RPE-retinal G protein-coupled receptor (291 aa).

Topologically, residues 1–15 are extracellular; sequence MAETSALPTGFGELE. The helical transmembrane segment at 16-36 threads the bilayer; that stretch reads VLAVGMVLLVEALSGLSLNTL. The Cytoplasmic segment spans residues 37 to 52; that stretch reads TIFSFCKTPELRTPCH. The chain crosses the membrane as a helical span at residues 53-73; it reads LLVLSLALADSGISLNALVAA. Over 74-91 the chain is Extracellular; it reads TSSLLRRWPYGSDGCQAH. Cysteine 88 and cysteine 162 are disulfide-bonded. Residues 92–112 traverse the membrane as a helical segment; that stretch reads GFQGFVTALASICSSAAIAWG. The Cytoplasmic portion of the chain corresponds to 113 to 130; it reads RYHHYCTRSQLAWNSAVS. Residues 131 to 151 form a helical membrane-spanning segment; sequence LVLFVWLSSAFWAALPLLGWG. Residues 152–175 are Extracellular-facing; it reads HYDYEPLGTCCTLDYSKGDRNFTS. Asparagine 172 is a glycosylation site (N-linked (GlcNAc...) asparagine). A helical membrane pass occupies residues 176–196; that stretch reads FLFTMSFFNFAMPLFITITSY. Over 197–219 the chain is Cytoplasmic; sequence SLMEQKLGKSGHLQVNTTLPART. The helical transmembrane segment at 220–240 threads the bilayer; sequence LLLGWGPYAILYLYAVIADVT. Over 241 to 247 the chain is Extracellular; sequence SISPKLQ. Residues 248–268 traverse the membrane as a helical segment; the sequence is MVPALIAKMVPTINAINYALG. Lysine 255 carries the N6-(retinylidene)lysine modification. Over 269 to 291 the chain is Cytoplasmic; that stretch reads NEMVCRGIWQCLSPQKREKDRTK.

The protein belongs to the G-protein coupled receptor 1 family. Opsin subfamily. Covalently binds all-trans- and 11-cis-retinal. As to expression, preferentially expressed at high levels in the retinal pigment epithelium (RPE) and Mueller cells of the neural retina.

It localises to the membrane. Its function is as follows. Receptor for all-trans- and 11-cis-retinal. Binds preferentially to the former and may catalyze the isomerization of the chromophore by a retinochrome-like mechanism. In Homo sapiens (Human), this protein is RPE-retinal G protein-coupled receptor (RGR).